Consider the following 1085-residue polypeptide: Cell wall protein IFF6 (1085 aa).

An N-terminal signal peptide occupies residues 1–19; it reads MLLKQIFLPFFVLFNAINA. Residues 339 to 1060 form a disordered region; sequence PSPGTDESSS…SSNSATIPEQ (722 aa). The segment covering 342–528 has biased composition (low complexity); sequence GTDESSSLSS…QSSSGTGQSS (187 aa). Residues 529–538 are compositionally biased toward acidic residues; that stretch reads TEDEPIDSTE. A compositionally biased stretch (low complexity) spans 539–828; it reads SDTSSATDSS…TVTNTATNTG (290 aa). Asparagine 659, asparagine 782, asparagine 854, asparagine 860, asparagine 864, asparagine 874, asparagine 882, asparagine 886, asparagine 890, asparagine 896, asparagine 900, asparagine 910, asparagine 924, asparagine 932, asparagine 938, asparagine 952, asparagine 960, asparagine 964, asparagine 968, asparagine 976, asparagine 980, asparagine 992, asparagine 996, asparagine 1008, and asparagine 1016 each carry an N-linked (GlcNAc...) asparagine glycan. A compositionally biased stretch (gly residues) spans 847 to 1010; that stretch reads NNGGGSNNGS…GSGSGSGNGS (164 aa). Residues 1018-1028 show a composition bias toward gly residues; it reads SGSGSGSGNGQ. The segment covering 1031–1052 has biased composition (low complexity); that stretch reads GIITSSIGQPGSSTSTQGPSSS. Asparagine 1062 carries the GPI-anchor amidated asparagine lipid modification. The propeptide at 1063 to 1085 is removed in mature form; the sequence is SGNHIKFTLFNGLLIGLVPIVFM.

It belongs to the HYR1/IFF family. The GPI-anchor is attached to the protein in the endoplasmic reticulum and serves to target the protein to the cell surface. There, the glucosamine-inositol phospholipid moiety is cleaved off and the GPI-modified mannoprotein is covalently attached via its lipidless GPI glycan remnant to the 1,6-beta-glucan of the outer cell wall layer.

The protein localises to the secreted. The protein resides in the cell wall. Its subcellular location is the membrane. GPI-anchored cell wall protein involved in cell wall organization, hyphal growth, as well as in host-fungal interaction and virulence. In Candida albicans (strain SC5314 / ATCC MYA-2876) (Yeast), this protein is Cell wall protein IFF6 (IFF6).